The following is a 236-amino-acid chain: MTQTKEERVHQVFESIYKRYDMMNSVISFQRHKAWRKDTMKRMKVQPGDHALDVCCGTADWTIALGEAVGHNGKVEGLDFSKNMLLIGEEKVKEHKMKHVSLRHGNAMELPYADETFDVVTIGFGLRNVPDYMQVLKEMHRVVKKGGKVVCLETSQPTIPVFKNLYFFYFRRVMPVFGKVFAKSYDEYSWLQESTMSFPNREKLAEMFREAGFERVDVKPYSGGVACMHLGVKGKN.

Residues Thr-58, Asp-79, and Asn-106–Ala-107 each bind S-adenosyl-L-methionine.

It belongs to the class I-like SAM-binding methyltransferase superfamily. MenG/UbiE family.

It carries out the reaction a 2-demethylmenaquinol + S-adenosyl-L-methionine = a menaquinol + S-adenosyl-L-homocysteine + H(+). It participates in quinol/quinone metabolism; menaquinone biosynthesis; menaquinol from 1,4-dihydroxy-2-naphthoate: step 2/2. Methyltransferase required for the conversion of demethylmenaquinol (DMKH2) to menaquinol (MKH2). The polypeptide is Demethylmenaquinone methyltransferase (Alkalihalophilus pseudofirmus (strain ATCC BAA-2126 / JCM 17055 / OF4) (Bacillus pseudofirmus)).